Consider the following 216-residue polypeptide: Purine nucleoside phosphorylase DeoD-type (216 aa).

Residues Arg4, Arg23, and 67–70 contribute to the phosphate site; that span reads RVGT. A purine D-ribonucleoside contacts are provided by residues 159–161 and 183–184; these read EME and SD. The Proton donor role is filled by Asp184.

This sequence belongs to the PNP/UDP phosphorylase family. Homohexamer; trimer of homodimers.

The enzyme catalyses a purine D-ribonucleoside + phosphate = a purine nucleobase + alpha-D-ribose 1-phosphate. It catalyses the reaction a purine 2'-deoxy-D-ribonucleoside + phosphate = a purine nucleobase + 2-deoxy-alpha-D-ribose 1-phosphate. Functionally, catalyzes the reversible phosphorolytic breakdown of the N-glycosidic bond in the beta-(deoxy)ribonucleoside molecules, with the formation of the corresponding free purine bases and pentose-1-phosphate. The protein is Purine nucleoside phosphorylase DeoD-type of Streptococcus thermophilus.